A 116-amino-acid polypeptide reads, in one-letter code: Protein Wnt-5b (116 aa).

A lipid anchor (O-palmitoleoyl serine; by PORCN) is attached at Ser-1. 2 N-linked (GlcNAc...) asparagine glycosylation sites follow: Asn-69 and Asn-83. Cys-82 and Cys-97 are oxidised to a cystine.

Belongs to the Wnt family. Palmitoleoylation is required for efficient binding to frizzled receptors. Depalmitoleoylation leads to Wnt signaling pathway inhibition.

The protein resides in the secreted. Its subcellular location is the extracellular space. It is found in the extracellular matrix. Functionally, ligand for members of the frizzled family of seven transmembrane receptors. Probable developmental protein. May be a signaling molecule which affects the development of discrete regions of tissues. Is likely to signal over only few cell diameters. The protein is Protein Wnt-5b (WNT-5B) of Plethodon jordani (Red-cheeked salamander).